Reading from the N-terminus, the 189-residue chain is Small ribosomal subunit protein uS4 (189 aa).

The S4 RNA-binding domain occupies 107 to 178; that stretch reads RRLQTQVFKL…AGRVKRKNQG (72 aa). Positions 160–189 are disordered; that stretch reads HNSPYGGGRAGRVKRKNQGKGGEEGAEEEE.

The protein belongs to the universal ribosomal protein uS4 family. As to quaternary structure, component of the small ribosomal subunit. Mature ribosomes consist of a small (40S) and a large (60S) subunit. The 40S subunit contains about 32 different proteins and 1 molecule of RNA (18S). The 60S subunit contains 45 different proteins and 3 molecules of RNA (25S, 5.8S and 5S).

The protein localises to the cytoplasm. Functionally, component of the ribosome, a large ribonucleoprotein complex responsible for the synthesis of proteins in the cell. The small ribosomal subunit (SSU) binds messenger RNAs (mRNAs) and translates the encoded message by selecting cognate aminoacyl-transfer RNA (tRNA) molecules. The large subunit (LSU) contains the ribosomal catalytic site termed the peptidyl transferase center (PTC), which catalyzes the formation of peptide bonds, thereby polymerizing the amino acids delivered by tRNAs into a polypeptide chain. The nascent polypeptides leave the ribosome through a tunnel in the LSU and interact with protein factors that function in enzymatic processing, targeting, and the membrane insertion of nascent chains at the exit of the ribosomal tunnel. RPS9B is involved in nucleolar processing of pre-18S ribosomal RNA and ribosome assembly. The sequence is that of Small ribosomal subunit protein uS4 (RPS9B) from Candida albicans (strain SC5314 / ATCC MYA-2876) (Yeast).